Reading from the N-terminus, the 331-residue chain is ADP-L-glycero-D-manno-heptose-6-epimerase (331 aa).

NADP(+)-binding positions include 11-12, 32-33, lysine 39, lysine 54, 75-79, and asparagine 92; these read FI, DN, and EGACS. Tyrosine 139 serves as the catalytic Proton acceptor. NADP(+) is bound at residue lysine 143. Asparagine 168 lines the substrate pocket. NADP(+) contacts are provided by valine 169 and lysine 177. Lysine 177 serves as the catalytic Proton acceptor. Residues arginine 179, histidine 186, 200-203, arginine 213, and tyrosine 292 each bind substrate; that span reads FGEY.

The protein belongs to the NAD(P)-dependent epimerase/dehydratase family. HldD subfamily. Homopentamer. NADP(+) is required as a cofactor.

It carries out the reaction ADP-D-glycero-beta-D-manno-heptose = ADP-L-glycero-beta-D-manno-heptose. The protein operates within nucleotide-sugar biosynthesis; ADP-L-glycero-beta-D-manno-heptose biosynthesis; ADP-L-glycero-beta-D-manno-heptose from D-glycero-beta-D-manno-heptose 7-phosphate: step 4/4. Its function is as follows. Catalyzes the interconversion between ADP-D-glycero-beta-D-manno-heptose and ADP-L-glycero-beta-D-manno-heptose via an epimerization at carbon 6 of the heptose. The protein is ADP-L-glycero-D-manno-heptose-6-epimerase of Cupriavidus necator (strain ATCC 17699 / DSM 428 / KCTC 22496 / NCIMB 10442 / H16 / Stanier 337) (Ralstonia eutropha).